A 98-amino-acid polypeptide reads, in one-letter code: MSLIHMNIIMAFTLSLVGLLMYRSHLMSALLCMEGMMLSLFILATLTALNLHFTLANMMPIILLVFAACEAAIGLALLVKISNTYGTDYVQNLNLLQC.

The next 3 helical transmembrane spans lie at 1–21 (MSLI…GLLM), 29–49 (ALLC…LTAL), and 59–79 (MPII…ALLV).

Belongs to the complex I subunit 4L family. As to quaternary structure, core subunit of respiratory chain NADH dehydrogenase (Complex I) which is composed of 45 different subunits.

It is found in the mitochondrion inner membrane. It carries out the reaction a ubiquinone + NADH + 5 H(+)(in) = a ubiquinol + NAD(+) + 4 H(+)(out). Its function is as follows. Core subunit of the mitochondrial membrane respiratory chain NADH dehydrogenase (Complex I) which catalyzes electron transfer from NADH through the respiratory chain, using ubiquinone as an electron acceptor. Part of the enzyme membrane arm which is embedded in the lipid bilayer and involved in proton translocation. The polypeptide is NADH-ubiquinone oxidoreductase chain 4L (MT-ND4L) (Hyperoodon ampullatus (Northern bottlenose whale)).